A 362-amino-acid chain; its full sequence is MTEALISAALNGTQPELLAGGWAAGNATTKCSLTKTGFQFYYLPTVYILVFITGFLGNSVAIWMFVFHMRPWSGISVYMFNLALADFLYVLTLPALIFYYFNKTDWIFGDVMCKLQRFIFHVNLYGSILFLTCISVHRYTGVVHPLKSLGRLKKKNAVYVSSLVWALVVAVIAPILFYSGTGVRRNKTITCYDTTADEYLRSYFVYSMCTTVFMFCIPFIVILGCYGLIVKALIYKDLDNSPLRRKSIYLVIIVLTVFAVSYLPFHVMKTLNLRARLDFQTPQMCAFNDKVYATYQVTRGLASLNSCVDPILYFLAGDTFRRRLSRATRKSSRRSEPNVQSKSEEMTLNILTEYKQNGDTSL.

Over 1-40 (MTEALISAALNGTQPELLAGGWAAGNATTKCSLTKTGFQF) the chain is Extracellular. N-linked (GlcNAc...) asparagine glycosylation is found at N11 and N26. 2 disulfides stabilise this stretch: C31–C285 and C113–C191. K35 lines the ADP pocket. The chain crosses the membrane as a helical span at residues 41 to 63 (YYLPTVYILVFITGFLGNSVAIW). The Cytoplasmic portion of the chain corresponds to 64–76 (MFVFHMRPWSGIS). Residues 77-98 (VYMFNLALADFLYVLTLPALIF) traverse the membrane as a helical segment. Over 99-114 (YYFNKTDWIFGDVMCK) the chain is Extracellular. A glycan (N-linked (GlcNAc...) asparagine) is linked at N102. A helical transmembrane segment spans residues 115 to 136 (LQRFIFHVNLYGSILFLTCISV). The Cytoplasmic portion of the chain corresponds to 137 to 155 (HRYTGVVHPLKSLGRLKKK). A helical transmembrane segment spans residues 156–177 (NAVYVSSLVWALVVAVIAPILF). Residues 178–203 (YSGTGVRRNKTITCYDTTADEYLRSY) are Extracellular-facing. An N-linked (GlcNAc...) asparagine glycan is attached at N186. 192–194 (YDT) provides a ligand contact to ADP. Residues 204–226 (FVYSMCTTVFMFCIPFIVILGCY) form a helical membrane-spanning segment. The Cytoplasmic portion of the chain corresponds to 227–249 (GLIVKALIYKDLDNSPLRRKSIY). The helical transmembrane segment at 250–273 (LVIIVLTVFAVSYLPFHVMKTLNL) threads the bilayer. ADP-binding positions include 272 to 276 (NLRAR), 292 to 295 (YATY), and R299. Topologically, residues 274–292 (RARLDFQTPQMCAFNDKVY) are extracellular. Residues 293–314 (ATYQVTRGLASLNSCVDPILYF) form a helical membrane-spanning segment. Residues 315 to 362 (LAGDTFRRRLSRATRKSSRRSEPNVQSKSEEMTLNILTEYKQNGDTSL) lie on the Cytoplasmic side of the membrane.

The protein belongs to the G-protein coupled receptor 1 family. As to expression, brain, spinal cord, gastrointestinal tract, spleen and leg muscle. Is not detected in the heart, liver, stomach, lung and kidney.

Its subcellular location is the cell membrane. Its function is as follows. Receptor for extracellular adenine nucleotides such as ADP. In platelets, binding to ADP leads to mobilization of intracellular calcium ions via activation of phospholipase C, a change in platelet shape, and ultimately platelet aggregation. This chain is P2Y purinoceptor 1 (P2RY1), found in Gallus gallus (Chicken).